The primary structure comprises 279 residues: Biotin synthase (279 aa).

The Radical SAM core domain maps to 1-227 (MKVYLCAISN…NAMIMVAGGR (227 aa)). Residues Cys-16, Cys-20, and Cys-23 each coordinate [4Fe-4S] cluster. Residues Cys-60, Cys-95, and Cys-153 each contribute to the [2Fe-2S] cluster site.

It belongs to the radical SAM superfamily. Biotin synthase family. Homodimer. Requires [4Fe-4S] cluster as cofactor. It depends on [2Fe-2S] cluster as a cofactor.

It catalyses the reaction (4R,5S)-dethiobiotin + (sulfur carrier)-SH + 2 reduced [2Fe-2S]-[ferredoxin] + 2 S-adenosyl-L-methionine = (sulfur carrier)-H + biotin + 2 5'-deoxyadenosine + 2 L-methionine + 2 oxidized [2Fe-2S]-[ferredoxin]. It participates in cofactor biosynthesis; biotin biosynthesis; biotin from 7,8-diaminononanoate: step 2/2. Catalyzes the conversion of dethiobiotin (DTB) to biotin by the insertion of a sulfur atom into dethiobiotin via a radical-based mechanism. The protein is Biotin synthase of Nitratiruptor sp. (strain SB155-2).